Here is a 769-residue protein sequence, read N- to C-terminus: Glutathione biosynthesis bifunctional protein GshAB (769 aa).

Residues 1 to 347 are glutamate--cysteine ligase; it reads MLDSFKENEA…QLADENENNI (347 aa). One can recognise an ATP-grasp domain in the interval 514–768; sequence KLVLAEHGIR…IGDKILDFLF (255 aa). 541 to 599 contacts ATP; sequence SLFEDKQIVVKPKSTNYGWGISIFKNKFTLEDYQEALNIAFSYDSSVIIEEFIPGDEFR. Positions 721, 738, and 740 each coordinate Mg(2+). Aspartate 721, glutamate 738, and asparagine 740 together coordinate Mn(2+).

The protein in the N-terminal section; belongs to the glutamate--cysteine ligase type 1 family. Type 2 subfamily. As to quaternary structure, monomer. Mg(2+) serves as cofactor. The cofactor is Mn(2+).

It catalyses the reaction L-cysteine + L-glutamate + ATP = gamma-L-glutamyl-L-cysteine + ADP + phosphate + H(+). The enzyme catalyses gamma-L-glutamyl-L-cysteine + glycine + ATP = glutathione + ADP + phosphate + H(+). The protein operates within sulfur metabolism; glutathione biosynthesis; glutathione from L-cysteine and L-glutamate: step 1/2. Its pathway is sulfur metabolism; glutathione biosynthesis; glutathione from L-cysteine and L-glutamate: step 2/2. Functionally, synthesizes glutathione from L-glutamate and L-cysteine via gamma-L-glutamyl-L-cysteine. In Listeria innocua serovar 6a (strain ATCC BAA-680 / CLIP 11262), this protein is Glutathione biosynthesis bifunctional protein GshAB.